Consider the following 351-residue polypeptide: MPSETLWEIAKAEVEKRGINGSEGDGAEIAEKFVFFIGSKNGGKTTIILRCLDRDEPPKPTLALEYTYGRRAKGHNTPKDIAHFWELGGGTSLLDLISIPITGDTLRTFSLVLVLDLSKPNDLWPTMENLLQATKSHVDKVIMKLGKTNAKAVSEMRQKIWNNMPKDHPDHELIDPFPVPLVIIGSKYDVFQDFESEKRKVICKTLRFVAHYYGASLMFTSKSEALLLKIRGVINQLAFGIDKSKSICVDQNKPLFITAGLDSFGQIGSPPVPENDIGKLHAHSPMELWKKVYEKLFPPKSINTLKDIKDPARDPQYAENEVDEMRIQKDLELEQYKRSSSKSWKQIELDS.

This sequence belongs to the dynein light intermediate chain family. As to quaternary structure, light intermediate chain of the cytoplasmic dynein complex 2, a multisubunit complex composed at least of eleven different proteins. The cytoplasmic dynein 2 complex consists of two catalytic heavy chains (HCs) and a number of non-catalytic subunits presented by intermediate chains (ICs), light intermediate chains (LICs) and light chains (LCs). Among them, a heavy chain (DYNC2H1), two intermediate chains (DYNC2I2 and DYNC2I1), a light intermediate chain (DYNC2LI1), and a light chain (DYNLT2B) are unique to the dynein-2 complex, but a subset of light chains are also shared by dynein-1 and dynein-2 complexes. Dynein-2 complex is built around two copies of cytoplasmic dynein 2 heavy chain 1 (DYNC2H1). The C-terminal region of DYNC2H1 forms the motor domain, which converts the energy from ATP hydrolysis into movement. Its N-terminal region forms the tail, an extended structure that binds the other subunits and holds the two heavy chains in a homodimer. Interacts with DYNC2H1 (via N-terminus); this interaction stabilizes the dynein-2 complex structure. As to expression, expressed in bone, brain, kidney, and cartilage. Lower expression in heart, liver, lung, placenta and thymus.

It is found in the golgi apparatus. The protein resides in the cytoplasm. The protein localises to the cell projection. It localises to the cilium. Its subcellular location is the cytoskeleton. It is found in the cilium basal body. The protein resides in the cilium axoneme. The protein localises to the microtubule organizing center. It localises to the centrosome. In terms of biological role, acts as one of several non-catalytic accessory components of the cytoplasmic dynein 2 complex (dynein-2 complex), a motor protein complex that drives the movement of cargos along microtubules within cilia and flagella in concert with the intraflagellar transport (IFT) system, facilitating the assembly of these organelles. Involved in the regulation of ciliary length. The polypeptide is Cytoplasmic dynein 2 light intermediate chain 1 (DYNC2LI1) (Homo sapiens (Human)).